The sequence spans 397 residues: Succinate--CoA ligase [ADP-forming] subunit beta (397 aa).

The 246-residue stretch at 9–254 (KALLKGYGAP…ETEEDAKEIE (246 aa)) folds into the ATP-grasp domain. ATP is bound by residues Lys46, 53 to 55 (GRG), Glu109, Ala112, and Glu117. Mg(2+)-binding residues include Asn209 and Asp223. Substrate-binding positions include Asn274 and 331-333 (GIM).

Belongs to the succinate/malate CoA ligase beta subunit family. As to quaternary structure, heterotetramer of two alpha and two beta subunits. It depends on Mg(2+) as a cofactor.

It catalyses the reaction succinate + ATP + CoA = succinyl-CoA + ADP + phosphate. It carries out the reaction GTP + succinate + CoA = succinyl-CoA + GDP + phosphate. The protein operates within carbohydrate metabolism; tricarboxylic acid cycle; succinate from succinyl-CoA (ligase route): step 1/1. Its function is as follows. Succinyl-CoA synthetase functions in the citric acid cycle (TCA), coupling the hydrolysis of succinyl-CoA to the synthesis of either ATP or GTP and thus represents the only step of substrate-level phosphorylation in the TCA. The beta subunit provides nucleotide specificity of the enzyme and binds the substrate succinate, while the binding sites for coenzyme A and phosphate are found in the alpha subunit. In Agrobacterium fabrum (strain C58 / ATCC 33970) (Agrobacterium tumefaciens (strain C58)), this protein is Succinate--CoA ligase [ADP-forming] subunit beta.